A 227-amino-acid polypeptide reads, in one-letter code: Interleukin-6 (227 aa).

The signal sequence occupies residues 1–22 (MASISYLLAPLVLAAVLQPTAG). Residues 24-45 (PLDAPTESPAGETSGEEAETGS) are disordered. Residues Cys93 and Cys103 are joined by a disulfide bond.

The protein belongs to the IL-6 superfamily. In terms of assembly, component of a hexamer of two molecules each of IL6, IL6R and IL6ST; first binds to IL6R to associate with the signaling subunit IL6ST. After induction, highly expressed in spleen. Can also be expressed in kidney after incubation with PHA.

It localises to the secreted. In terms of biological role, cytokine with a wide variety of biological functions in immunity, tissue regeneration, and metabolism. Binds to IL6R, then the complex associates to the signaling subunit IL6ST/gp130 to trigger the intracellular IL6-signaling pathway. The interaction with the membrane-bound IL6R and IL6ST stimulates 'classic signaling', whereas the binding of IL6 and soluble IL6R to IL6ST stimulates 'trans-signaling'. Alternatively, 'cluster signaling' occurs when membrane-bound IL6:IL6R complexes on transmitter cells activate IL6ST receptors on neighboring receiver cells. The sequence is that of Interleukin-6 (il6) from Takifugu rubripes (Japanese pufferfish).